A 354-amino-acid polypeptide reads, in one-letter code: Uroporphyrinogen decarboxylase (354 aa).

Residues 27 to 31 (RQAGR), Asp-77, Tyr-154, Ser-209, and His-327 each bind substrate.

This sequence belongs to the uroporphyrinogen decarboxylase family. As to quaternary structure, homodimer.

The protein localises to the cytoplasm. It catalyses the reaction uroporphyrinogen III + 4 H(+) = coproporphyrinogen III + 4 CO2. It functions in the pathway porphyrin-containing compound metabolism; protoporphyrin-IX biosynthesis; coproporphyrinogen-III from 5-aminolevulinate: step 4/4. Functionally, catalyzes the decarboxylation of four acetate groups of uroporphyrinogen-III to yield coproporphyrinogen-III. The chain is Uroporphyrinogen decarboxylase from Shewanella baltica (strain OS185).